The following is a 328-amino-acid chain: Serine protease 48 (328 aa).

An N-terminal signal peptide occupies residues 1–20 (MGPAGCAFTLLLLLGISVCG). The 240-residue stretch at 28-267 (VVGGQDAAAG…YQKWINATIS (240 aa)) folds into the Peptidase S1 domain. Cys-53 and Cys-69 form a disulfide bridge. Residues His-68 and Asp-114 each act as charge relay system in the active site. Cystine bridges form between Cys-148/Cys-226, Cys-181/Cys-205, and Cys-216/Cys-244. The active-site Charge relay system is Ser-220. Asn-263 carries an N-linked (GlcNAc...) asparagine glycan.

Belongs to the peptidase S1 family.

Its subcellular location is the secreted. This Homo sapiens (Human) protein is Serine protease 48 (PRSS48).